The chain runs to 504 residues: Endosomal/lysosomal proton channel TMEM175 (504 aa).

Positions 1–27 (MSQPRTPEQALDTPGDCPPGRRDEDAG) are disordered. The Cytoplasmic segment spans residues 1–33 (MSQPRTPEQALDTPGDCPPGRRDEDAGEGIQCS). Threonine 6 bears the Phosphothreonine mark. A helical membrane pass occupies residues 34 to 56 (QRMLSFSDALLSIIATVMILPVT). Residues 35-41 (RMLSFSD) carry the RxxxFSD motif 1 motif. Residues 57-77 (HTEISPEQQFDRSVQRLLATR) lie on the Lumenal side of the membrane. The tract at residues 58–63 (TEISPE) is short helix H1-1. A short helix H2-1 region spans residues 65-71 (QFDRSVQ). Residues 78–100 (IAVYLMTFLIVTVAWAAHTRLFQ) form a helical membrane-spanning segment. Topologically, residues 101 to 106 (VVGKTD) are cytoplasmic. A helical membrane pass occupies residues 107 to 128 (DTLALLNLACMMTITFLPYTFS). Topologically, residues 129 to 138 (LMVTFPDVPL) are lumenal. Residues 139–160 (GIFLFCVCVIAIGVVQALIVGY) traverse the membrane as a helical segment. Topologically, residues 161–184 (AFHFPHLLSPQIQRSAHRALYRRH) are cytoplasmic. The helical transmembrane segment at 185–205 (VLGIVLQGPALCFAAAIFSLF) threads the bilayer. Residues 206 to 210 (FVPLS) are Lumenal-facing. Residues 211–230 (YLLMVTVILLPYVSKVTGWC) traverse the membrane as a helical segment. Topologically, residues 231 to 257 (RDRLLGHREPSAHPVEVFSFDLHEPLS) are cytoplasmic. A helical transmembrane segment spans residues 258–282 (KERVEAFSDGVYAIVATLLILDICE). The RxxxFSD motif 2 motif lies at 260-266 (RVEAFSD). Topologically, residues 283-309 (DNVPDPKDVKERFSGSLVAALSATGPR) are lumenal. The segment at 288–296 (PKDVKERFS) is short helix H1-2. A short helix H2-2 region spans residues 298–304 (SLVAALS). A helical transmembrane segment spans residues 310-332 (FLAYFGSFATVGLLWFAHHSLFL). The Cytoplasmic segment spans residues 333–338 (HVRKAT). Residues 339–360 (RAMGLLNTLSLAFVGGLPLAYQ) form a helical membrane-spanning segment. The Lumenal portion of the chain corresponds to 361 to 375 (QTSAFARQPRDELER). The chain crosses the membrane as a helical span at residues 376 to 396 (VRVSCTIIFLASIFQLAMWTT). The Cytoplasmic portion of the chain corresponds to 397–416 (ALLHQAETLQPSVWFGGREH). The chain crosses the membrane as a helical span at residues 417–440 (VLMFAKLALYPCASLLAFASTCLL). Residues 441–442 (SR) are Lumenal-facing. Residues 443 to 469 (FSVGIFHLMQIAVPCAFLLLRLLVGLA) form a helical membrane-spanning segment. Residues 470 to 504 (LATLRVLRGLARPEHPPPAPTGQDDPQSQLLPAPC) lie on the Cytoplasmic side of the membrane. The disordered stretch occupies residues 483-504 (EHPPPAPTGQDDPQSQLLPAPC). Residues 493-504 (DDPQSQLLPAPC) are compositionally biased toward polar residues.

Belongs to the TMEM175 family. Homodimer. Interacts with AKT (AKT1, AKT2 or AKT3); leading to formation of the lysoK(GF) complex, which activates the channel. Interacts with LAMP1; inhibiting the proton channel activity of TMEM175. Interacts with LAMP2; inhibiting the proton channel activity of TMEM175. As to expression, widely expressed.

The protein resides in the endosome membrane. Its subcellular location is the lysosome membrane. It carries out the reaction H(+)(in) = H(+)(out). The catalysed reaction is K(+)(in) = K(+)(out). With respect to regulation, active at low pH (under pH 4.6): proton channel activity is activated by luminal side protons. Polyunsaturated fatty acids, such as arachidonic acid, also activate the channel activity. Proton channel activity is directly inhibited by LAMP1 or LAMP2, facilitating lysosomal acidification. Channel activity is activated following interaction with AKT (AKT1, AKT2 or AKT3): interaction promotes activation from closed to an open state. Activation by AKT is independent of AKT serine/threonine-protein kinase activity. Proton-activated proton channel that catalyzes proton efflux from endosomes and lysosomes to maintain a steady-state pH. Activated at low pH (under pH 4.6) by luminal side protons: selectively mediates lysosomal proton release from lysosomes, eliciting a proton leak that balances V-ATPase activity to maintain pH homeostasis. Regulation of lumenal pH stability is required for autophagosome-lysosome fusion. Also acts as a potassium channel at higher pH, regulating potassium conductance in endosomes and lysosomes. Constitutes the pore-forming subunit of the lysoK(GF) complex, a complex activated by extracellular growth factors. The lysoK(GF) complex is composed of TMEM175 and AKT (AKT1, AKT2 or AKT3), a major target of growth factor receptors: in the complex, TMEM175 channel is opened by conformational changes by AKT, leading to its activation. The lysoK(GF) complex is required to protect neurons against stress-induced damage. This is Endosomal/lysosomal proton channel TMEM175 from Homo sapiens (Human).